The primary structure comprises 226 residues: Glutathione peroxidase 3 (226 aa).

Positions 1-24 are cleaved as a signal peptide; it reads MARLLQASCLLSLLLAGFVPQSRG. Selenocysteine 73 is an active-site residue. Position 73 (selenocysteine 73) is a non-standard amino acid, selenocysteine.

This sequence belongs to the glutathione peroxidase family. In terms of assembly, homotetramer. In terms of tissue distribution, secreted in plasma.

The protein resides in the secreted. The enzyme catalyses 2 glutathione + H2O2 = glutathione disulfide + 2 H2O. It carries out the reaction tert-butyl hydroperoxide + 2 glutathione = tert-butanol + glutathione disulfide + H2O. Its function is as follows. Protects cells and enzymes from oxidative damage, by catalyzing the reduction of hydrogen peroxide, lipid peroxides and organic hydroperoxide, by glutathione. This Pongo pygmaeus (Bornean orangutan) protein is Glutathione peroxidase 3.